The sequence spans 329 residues: Transaldolase (329 aa).

Lysine 136 functions as the Schiff-base intermediate with substrate in the catalytic mechanism.

The protein belongs to the transaldolase family. Type 1 subfamily. As to quaternary structure, homodimer.

It is found in the cytoplasm. The catalysed reaction is D-sedoheptulose 7-phosphate + D-glyceraldehyde 3-phosphate = D-erythrose 4-phosphate + beta-D-fructose 6-phosphate. It functions in the pathway carbohydrate degradation; pentose phosphate pathway; D-glyceraldehyde 3-phosphate and beta-D-fructose 6-phosphate from D-ribose 5-phosphate and D-xylulose 5-phosphate (non-oxidative stage): step 2/3. Transaldolase is important for the balance of metabolites in the pentose-phosphate pathway. The protein is Transaldolase of Methylococcus capsulatus (strain ATCC 33009 / NCIMB 11132 / Bath).